A 202-amino-acid chain; its full sequence is Holliday junction branch migration complex subunit RuvA (202 aa).

Positions 1-63 (MIEYLKGAIV…EDAHLLYGFS (63 aa)) are domain I. Positions 64–142 (TKEERTLFGQ…LETSSDEILS (79 aa)) are domain II. The flexible linker stretch occupies residues 143-153 (ARTAVGDAALN). Residues 153 to 202 (NTIASGEEAISALKMLGFADPAIRKAVKSILSEDSSLAVEDIIKRALRML) form a domain III region.

Belongs to the RuvA family. In terms of assembly, homotetramer. Forms an RuvA(8)-RuvB(12)-Holliday junction (HJ) complex. HJ DNA is sandwiched between 2 RuvA tetramers; dsDNA enters through RuvA and exits via RuvB. An RuvB hexamer assembles on each DNA strand where it exits the tetramer. Each RuvB hexamer is contacted by two RuvA subunits (via domain III) on 2 adjacent RuvB subunits; this complex drives branch migration. In the full resolvosome a probable DNA-RuvA(4)-RuvB(12)-RuvC(2) complex forms which resolves the HJ.

It is found in the cytoplasm. The RuvA-RuvB-RuvC complex processes Holliday junction (HJ) DNA during genetic recombination and DNA repair, while the RuvA-RuvB complex plays an important role in the rescue of blocked DNA replication forks via replication fork reversal (RFR). RuvA specifically binds to HJ cruciform DNA, conferring on it an open structure. The RuvB hexamer acts as an ATP-dependent pump, pulling dsDNA into and through the RuvAB complex. HJ branch migration allows RuvC to scan DNA until it finds its consensus sequence, where it cleaves and resolves the cruciform DNA. The polypeptide is Holliday junction branch migration complex subunit RuvA (Porphyromonas gingivalis (strain ATCC BAA-308 / W83)).